Consider the following 215-residue polypeptide: UPF0502 protein PP_2442 (215 aa).

This sequence belongs to the UPF0502 family.

The polypeptide is UPF0502 protein PP_2442 (Pseudomonas putida (strain ATCC 47054 / DSM 6125 / CFBP 8728 / NCIMB 11950 / KT2440)).